The primary structure comprises 946 residues: Bifunctional glutamine synthetase adenylyltransferase/adenylyl-removing enzyme (946 aa).

Residues 1–440 are adenylyl removase; sequence MKPLSSPLQQ…VFNELIGDDE (440 aa). An adenylyl transferase region spans residues 449-946; sequence SEQWRELWQD…ASWQKWLVEE (498 aa).

It belongs to the GlnE family. Requires Mg(2+) as cofactor.

The catalysed reaction is [glutamine synthetase]-O(4)-(5'-adenylyl)-L-tyrosine + phosphate = [glutamine synthetase]-L-tyrosine + ADP. It catalyses the reaction [glutamine synthetase]-L-tyrosine + ATP = [glutamine synthetase]-O(4)-(5'-adenylyl)-L-tyrosine + diphosphate. In terms of biological role, involved in the regulation of glutamine synthetase GlnA, a key enzyme in the process to assimilate ammonia. When cellular nitrogen levels are high, the C-terminal adenylyl transferase (AT) inactivates GlnA by covalent transfer of an adenylyl group from ATP to specific tyrosine residue of GlnA, thus reducing its activity. Conversely, when nitrogen levels are low, the N-terminal adenylyl removase (AR) activates GlnA by removing the adenylyl group by phosphorolysis, increasing its activity. The regulatory region of GlnE binds the signal transduction protein PII (GlnB) which indicates the nitrogen status of the cell. The chain is Bifunctional glutamine synthetase adenylyltransferase/adenylyl-removing enzyme from Shigella flexneri.